Here is a 496-residue protein sequence, read N- to C-terminus: Beta-amylase (496 aa).

3 residues coordinate substrate: Asp-54, His-94, and Asp-102. Glu-187 functions as the Proton donor in the catalytic mechanism. The substrate site is built by Lys-296, His-301, and Thr-343. Glu-381 acts as the Proton acceptor in catalysis. Residues 382–383 (NA) and Arg-421 each bind substrate. Residues 455–496 (YNHGIPPLKRSGPKIPDDVLNEATKPIPPFPWDSETDMKVDG) are disordered.

Belongs to the glycosyl hydrolase 14 family.

The enzyme catalyses Hydrolysis of (1-&gt;4)-alpha-D-glucosidic linkages in polysaccharides so as to remove successive maltose units from the non-reducing ends of the chains.. This chain is Beta-amylase (BMY1), found in Medicago sativa (Alfalfa).